A 263-amino-acid chain; its full sequence is Undecaprenyl-diphosphatase (263 aa).

Helical transmembrane passes span Arg38–Leu58, Arg75–Val95, Pro108–Gly128, Val135–Pro155, Phe181–Met201, Val217–Ile237, and Phe242–Ala262.

This sequence belongs to the UppP family.

It localises to the cell inner membrane. The enzyme catalyses di-trans,octa-cis-undecaprenyl diphosphate + H2O = di-trans,octa-cis-undecaprenyl phosphate + phosphate + H(+). Functionally, catalyzes the dephosphorylation of undecaprenyl diphosphate (UPP). Confers resistance to bacitracin. This Xanthomonas campestris pv. campestris (strain 8004) protein is Undecaprenyl-diphosphatase.